Here is a 270-residue protein sequence, read N- to C-terminus: Orotidine 5'-phosphate decarboxylase (270 aa).

Substrate contacts are provided by residues aspartate 43, 65–67 (KTH), 96–105 (DRKFGDIGST), tyrosine 217, and arginine 236. Catalysis depends on lysine 98, which acts as the Proton donor.

The protein belongs to the OMP decarboxylase family.

The catalysed reaction is orotidine 5'-phosphate + H(+) = UMP + CO2. It functions in the pathway pyrimidine metabolism; UMP biosynthesis via de novo pathway; UMP from orotate: step 2/2. This chain is Orotidine 5'-phosphate decarboxylase (URA3), found in Aureobasidium pullulans (Black yeast).